The sequence spans 263 residues: 4-hydroxy-tetrahydrodipicolinate reductase (263 aa).

NAD(+) is bound by residues Gly-7 to Met-12, Gly-96 to Thr-98, and Ala-122 to Phe-125. The active-site Proton donor/acceptor is His-152. A (S)-2,3,4,5-tetrahydrodipicolinate-binding site is contributed by His-153. Lys-156 (proton donor) is an active-site residue. Gly-162 to Thr-163 is a (S)-2,3,4,5-tetrahydrodipicolinate binding site.

It belongs to the DapB family.

It localises to the cytoplasm. The catalysed reaction is (S)-2,3,4,5-tetrahydrodipicolinate + NAD(+) + H2O = (2S,4S)-4-hydroxy-2,3,4,5-tetrahydrodipicolinate + NADH + H(+). It carries out the reaction (S)-2,3,4,5-tetrahydrodipicolinate + NADP(+) + H2O = (2S,4S)-4-hydroxy-2,3,4,5-tetrahydrodipicolinate + NADPH + H(+). Its pathway is amino-acid biosynthesis; L-lysine biosynthesis via DAP pathway; (S)-tetrahydrodipicolinate from L-aspartate: step 4/4. Its function is as follows. Catalyzes the conversion of 4-hydroxy-tetrahydrodipicolinate (HTPA) to tetrahydrodipicolinate. The chain is 4-hydroxy-tetrahydrodipicolinate reductase from Listeria monocytogenes serotype 4b (strain CLIP80459).